The sequence spans 306 residues: Curved DNA-binding protein (306 aa).

The region spanning 5–69 is the J domain; sequence DYYAIMGVKP…QRRAEYDQMW (65 aa).

It is found in the cytoplasm. The protein localises to the nucleoid. Functionally, DNA-binding protein that preferentially recognizes a curved DNA sequence. It is probably a functional analog of DnaJ; displays overlapping activities with DnaJ, but functions under different conditions, probably acting as a molecular chaperone in an adaptive response to environmental stresses other than heat shock. Lacks autonomous chaperone activity; binds native substrates and targets them for recognition by DnaK. Its activity is inhibited by the binding of CbpM. The chain is Curved DNA-binding protein from Escherichia coli O8 (strain IAI1).